Consider the following 436-residue polypeptide: Mitochondrial substrate carrier family protein Y (436 aa).

The tract at residues 1–102 is disordered; the sequence is MENNNKNINT…NINNNNINKK (102 aa). Residues 1-137 are Mitochondrial intermembrane-facing; the sequence is MENNNKNINT…GGFLAGLSRN (137 aa). Solcar repeat units follow at residues 135–226 and 236–334; these read SRNV…TLKY and HDTL…LKKQ. Residues 138-158 form a helical membrane-spanning segment; it reads VTRIIGSFSSGMAEESAGYPL. The Mitochondrial matrix portion of the chain corresponds to 159 to 194; sequence DLIKTRIQLSQSGVSGGGGTNTSIIKIFKDVIKTEG. A helical membrane pass occupies residues 195–215; that stretch reads VIGLFKGLSSPLILSALVTAI. Residues 216-238 lie on the Mitochondrial intermembrane side of the membrane; it reads QFGLFEDTLKYFRKHQYFKNHDT. Residues 239–259 form a helical membrane-spanning segment; sequence LSLLFSGSIAGFAQSFITCPV. The Mitochondrial matrix segment spans residues 260-313; the sequence is DLVKIQMQIQGIPSSQPNSNNNNNNNKAKGNSYFTKLIYREKGLLGFYQGLSPT. The chain crosses the membrane as a helical span at residues 314–334; it reads LFRDVPGLAIFFTTYETLKKQ. The Mitochondrial intermembrane segment spans residues 335–347; the sequence is FGQPELSTQSPTE. The helical transmembrane segment at 348 to 368 threads the bilayer; that stretch reads FIKSFIPIVLSGGSAGVFYHG. The Solcar 3 repeat unit spans residues 350–436; it reads KSFIPIVLSG…FLVYEMVINL (87 aa). Residues 369–413 are Mitochondrial matrix-facing; it reads LTHPFDIAKTLIQSDRSATKYKGTFDCLKQVYQNQGPKSLFKGFS. The chain crosses the membrane as a helical span at residues 414–434; it reads AVAIKSFQSNAVGFLVYEMVI. Over 435–436 the chain is Mitochondrial intermembrane; that stretch reads NL.

The protein belongs to the mitochondrial carrier (TC 2.A.29) family.

It localises to the mitochondrion inner membrane. Mitochondrial solute carriers shuttle metabolites, nucleotides, and cofactors through the mitochondrial inner membrane. The protein is Mitochondrial substrate carrier family protein Y (mcfY) of Dictyostelium discoideum (Social amoeba).